A 90-amino-acid polypeptide reads, in one-letter code: U7-theraphotoxin-Hhn1f (90 aa).

Residues 1 to 19 (MKTAIFTVVLALAVFAVLS) form the signal peptide. A propeptide spanning residues 20–50 (FGWEANEKALSEEFTELIHEKEAASETEARG) is cleaved from the precursor. 3 cysteine pairs are disulfide-bonded: Cys-51/Cys-65, Cys-58/Cys-70, and Cys-64/Cys-81.

The protein belongs to the neurotoxin 10 (Hwtx-1) family. 13 (Hntx-13) subfamily. Expressed by the venom gland.

The protein localises to the secreted. In terms of biological role, ion channel inhibitor. The chain is U7-theraphotoxin-Hhn1f from Cyriopagopus hainanus (Chinese bird spider).